A 223-amino-acid polypeptide reads, in one-letter code: MNLQRLSIFGTDNIGVYIYTNNKYTVVPRGLDSETKENIVQILGTELIEAEISRSFLLGIFISGNDNGILLPKSTIDDEFRFLKENLRDCRVEVLNSKVTALGNTILTNNKAALIYPEFNDIEEKIIKETLGVEEIRRGKIAQMITVGSVGVVTNKGGLVHVDTSEKELKELEKLFSVKIDIGTVNFGSVFIRSGLVANDKGTLVGASTTGPEILRIQKALGE.

The protein belongs to the eIF-6 family.

Its function is as follows. Binds to the 50S ribosomal subunit and prevents its association with the 30S ribosomal subunit to form the 70S initiation complex. In Saccharolobus islandicus (strain Y.N.15.51 / Yellowstone #2) (Sulfolobus islandicus), this protein is Translation initiation factor 6.